Here is a 329-residue protein sequence, read N- to C-terminus: GTPase Obg (329 aa).

One can recognise an Obg domain in the interval 1-159; the sequence is MQFIDEAKIF…MWVWLHLKLL (159 aa). The region spanning 160–327 is the OBG-type G domain; it reads SDVGLVGLPN…LLANILSELQ (168 aa). Residues 166–173, 191–195, 212–215, 279–282, and 308–310 each bind GTP; these read GLPNAGKS, FTTLT, DIPG, TKTD, and SSY. Mg(2+) contacts are provided by Ser-173 and Thr-193.

It belongs to the TRAFAC class OBG-HflX-like GTPase superfamily. OBG GTPase family. As to quaternary structure, monomer. Mg(2+) is required as a cofactor.

It is found in the cytoplasm. Its function is as follows. An essential GTPase which binds GTP, GDP and possibly (p)ppGpp with moderate affinity, with high nucleotide exchange rates and a fairly low GTP hydrolysis rate. Plays a role in control of the cell cycle, stress response, ribosome biogenesis and in those bacteria that undergo differentiation, in morphogenesis control. The polypeptide is GTPase Obg (Orientia tsutsugamushi (strain Ikeda) (Rickettsia tsutsugamushi)).